Reading from the N-terminus, the 303-residue chain is UDP-3-O-acyl-N-acetylglucosamine deacetylase (303 aa).

Residues His78, His237, and Asp241 each coordinate Zn(2+). Catalysis depends on His264, which acts as the Proton donor.

It belongs to the LpxC family. Zn(2+) is required as a cofactor.

The enzyme catalyses a UDP-3-O-[(3R)-3-hydroxyacyl]-N-acetyl-alpha-D-glucosamine + H2O = a UDP-3-O-[(3R)-3-hydroxyacyl]-alpha-D-glucosamine + acetate. Its pathway is glycolipid biosynthesis; lipid IV(A) biosynthesis; lipid IV(A) from (3R)-3-hydroxytetradecanoyl-[acyl-carrier-protein] and UDP-N-acetyl-alpha-D-glucosamine: step 2/6. Its function is as follows. Catalyzes the hydrolysis of UDP-3-O-myristoyl-N-acetylglucosamine to form UDP-3-O-myristoylglucosamine and acetate, the committed step in lipid A biosynthesis. The protein is UDP-3-O-acyl-N-acetylglucosamine deacetylase of Pseudomonas fluorescens (strain SBW25).